We begin with the raw amino-acid sequence, 731 residues long: Two pore channel protein 2 (731 aa).

Residues 1 to 68 are Cytoplasmic-facing; it reads MAAEEQPLLG…RWYYSNVCQR (68 aa). A helical transmembrane segment spans residues 69–89; it reads VLGFIIFLILILAFVEVPSSF. Over 90 to 111 the chain is Extracellular; that stretch reads TKTADVRYRSQPWQPPCGLTET. Residues 112 to 132 form a helical membrane-spanning segment; the sequence is IEAFCLLAFLVDLSVKGYLVG. Residues 133-139 are Cytoplasmic-facing; the sequence is QAQLQQN. The chain crosses the membrane as a helical span at residues 140-160; sequence LWLLAYFMVLVVSVVDWIVSL. Over 161 to 167 the chain is Extracellular; that stretch reads SLACEEP. The chain crosses the membrane as a helical span at residues 168 to 188; it reads LRMRRLLRPFFLLQNSSMMKK. The tract at residues 187 to 191 is interaction with phosphatidylinositol 3,5-bisphosphate; it reads KKTLK. Residues 189-203 are Cytoplasmic-facing; it reads TLKCIRWSLPEMASV. A helical transmembrane segment spans residues 204-224; the sequence is GLLLAIHLCLFTIIGMLLFTI. Topologically, residues 225–238 are extracellular; the sequence is GEKDEAQDQERLAY. Positions 239-263 form an intramembrane region, helical; Pore-forming; it reads FRNLPEALTSLLVLLTTSNNPDVMI. At 264-270 the chain is on the extracellular side; sequence PAYTQNR. Residues 271–291 traverse the membrane as a helical segment; sequence AFALFFIVFTLIGSLFLMNLL. Residues 292–417 lie on the Cytoplasmic side of the membrane; sequence TAIIYNQFRG…TAQFIFSHHY (126 aa). Residues 418–438 form a helical membrane-spanning segment; the sequence is FDYLGNLVALGNLLSICVFLV. Residues 439-449 are Extracellular-facing; sequence LDSDLLPGERD. Residues 450–470 form a helical membrane-spanning segment; it reads DFVLGILDYIFILYYLLELLF. The Cytoplasmic portion of the chain corresponds to 471 to 486; that stretch reads KVFALGLPGYLSYHSN. The helical transmembrane segment at 487–507 threads the bilayer; it reads VFDGLLTIILLVSEICTLAVY. At 508–524 the chain is on the extracellular side; the sequence is RLPHSGWKPEQYGPLSL. The chain crosses the membrane as a helical span at residues 525-542; sequence WDMTRLMNTLIVFRFLRI. Residues 543 to 564 lie on the Cytoplasmic side of the membrane; sequence IPNIKPMAEVANTILGLIPNLR. Residues 565–585 traverse the membrane as a helical segment; it reads AFGGILVVAYYVFAMIGINLF. Topologically, residues 586–618 are extracellular; that stretch reads RGVIVPPGNSSLVPDNNSAVCGSFEQLGYWPNN. N-linked (GlcNAc...) asparagine glycans are attached at residues Asn-594 and Asn-601. Residues 619 to 641 constitute an intramembrane region (helical; Pore-forming); the sequence is FDDFAAALITLWNVMVVNNWQVI. Topologically, residues 642–656 are extracellular; the sequence is LEAYKRYAGPWSMVY. The chain crosses the membrane as a helical span at residues 657–677; that stretch reads FVLWWLVSSVIWINLFLALLL. Residues 678–731 lie on the Cytoplasmic side of the membrane; sequence ENFLHRWDPQGHKQLLVGTKQMSVELMFRDILEEPKEEELMEKLHKHPHLHLCR.

Belongs to the calcium channel alpha-1 subunit (TC 1.A.1.11) family. Two pore calcium channel subfamily. In terms of assembly, homodimer. Interacts with LRRK2. Interacts with HAX1. Interacts with MTOR; the interaction is required for TPCN2 ATP sensitivity. Found in a complex with LSM12, TPCN1 and TPCN2. Interacts with LSM12. In terms of processing, N-glycosylated. In terms of tissue distribution, widely expressed. Highly expressed in macrophages. Expressed in pigmented cells.

The protein localises to the late endosome membrane. It localises to the lysosome membrane. Its subcellular location is the melanosome membrane. The catalysed reaction is Ca(2+)(in) = Ca(2+)(out). The enzyme catalyses Na(+)(in) = Na(+)(out). With respect to regulation, regulated by Mg(2+) ions, cytosolic Mg(2+) selectively inhibits outward current while lysosomal Mg(2+) modestly inhibits both the outward and inward currents. In the absence of Mg(2+), NAADP readily activates TPCN2, with properties similar to PI(3,5)P2. Na(+) current is inhibited by ATP in a MTORC-dependent manner. ATP sensitivity is independent of PI(3,5)P2. Both current elicited by PI(3,5)P2 as well as NAADP are inhibited by tetrandrine. Its function is as follows. Intracellular channel initially characterized as a non-selective Ca(2+)-permeable channel activated by NAADP (nicotinic acid adenine dinucleotide phosphate), it is also a highly-selective Na(+) channel activated directly by PI(3,5)P2 (phosphatidylinositol 3,5-bisphosphate). Localizes to the lysosomal and late endosome membranes where it regulates organellar membrane excitability, membrane trafficking, and pH homeostasis. Is associated with a plethora of physiological processes, including mTOR-dependent nutrient sensing, skin pigmentation and autophagy. Ion selectivity is not fixed but rather agonist-dependent and under defined ionic conditions, can be readily activated by both NAADP and PI(3,5)P2. As calcium channel, it increases the pH in the lysosomal lumen, as sodium channel, it promotes lysosomal exocytosis. Plays a crucial role in endolysosomal trafficking in the endolysosomal degradation pathway and is potentially involved in the homeostatic control of many macromolecules and cell metabolites. Also expressed in melanosomes of pigmented cells where mediates a Ca(2+) channel and/or PI(3,5)P2-activated melanosomal Na(+) channel to acidify pH and inhibit tyrosinase activity required for melanogenesis and pigmentation. Unlike the voltage-dependent TPCN1, TPCN2 is voltage independent and can be activated solely by PI(3,5)P2 binding. In contrast, PI(4,5)P2, PI(3,4)P2, PI(3)P and PI(5)P have no obvious effect on channel activation. Functionally, (Microbial infection) During Ebola virus (EBOV) infection, controls the movement of endosomes containing virus particles and is required by EBOV to escape from the endosomal network into the cell cytoplasm. The sequence is that of Two pore channel protein 2 from Mus musculus (Mouse).